The primary structure comprises 224 residues: Phosphoribosyltransferase domain-containing protein 1 (224 aa).

Glu140 and Asp141 together coordinate Mg(2+). GMP is bound by residues 140-148, Lys172, 193-194, and Asp200; these read EDIINTGRT and FV. Asp200 lines the Mg(2+) pocket.

This sequence belongs to the purine/pyrimidine phosphoribosyltransferase family.

This is Phosphoribosyltransferase domain-containing protein 1 (prtfdc1) from Xenopus laevis (African clawed frog).